A 394-amino-acid chain; its full sequence is 3-hydroxybenzoate 6-hydroxylase 1 (394 aa).

It belongs to the 3-hydroxybenzoate 6-hydroxylase family. Homotrimer. Requires FAD as cofactor.

The catalysed reaction is 3-hydroxybenzoate + NADH + O2 + H(+) = 2,5-dihydroxybenzoate + NAD(+) + H2O. With respect to regulation, inhibited by manganese, copper, mercury, and iron ions. In terms of biological role, catalyzes the NAD- or NADP-dependent conversion of 3-hydroxybenzoate to gentisate. The affinity of the enzyme toward NAD is twice as high as for NADP. The enzyme shows higher specific activities against the intermediates in the degradation of 2,5-xylenol and 3,5-xylenol, 3-hydroxy-4-methylbenzoate and 3-hydroxy-5-methylbenzoate, respectively, than for 3-hydroxybenzoate. It also shows activity against 3-substituted benzoates. This Aquipseudomonas alcaligenes (Pseudomonas alcaligenes) protein is 3-hydroxybenzoate 6-hydroxylase 1 (xlnD).